The following is a 611-amino-acid chain: Probable Xaa-Pro aminopeptidase P (611 aa).

Positions 408, 419, 517, and 531 each coordinate Mn(2+).

The protein belongs to the peptidase M24B family. Mn(2+) serves as cofactor.

The enzyme catalyses Release of any N-terminal amino acid, including proline, that is linked to proline, even from a dipeptide or tripeptide.. Catalyzes the removal of a penultimate prolyl residue from the N-termini of peptides. The sequence is that of Probable Xaa-Pro aminopeptidase P (AMPP) from Coccidioides posadasii (strain RMSCC 757 / Silveira) (Valley fever fungus).